The primary structure comprises 386 residues: Succinate--CoA ligase [ADP-forming] subunit beta (386 aa).

ATP is bound by residues K46, 53 to 55 (GRG), E99, A102, and E107. 2 residues coordinate Mg(2+): N199 and D213. Substrate-binding positions include N264 and 321–323 (GIV).

Belongs to the succinate/malate CoA ligase beta subunit family. Heterotetramer of two alpha and two beta subunits. The cofactor is Mg(2+).

It catalyses the reaction succinate + ATP + CoA = succinyl-CoA + ADP + phosphate. The catalysed reaction is GTP + succinate + CoA = succinyl-CoA + GDP + phosphate. Its pathway is carbohydrate metabolism; tricarboxylic acid cycle; succinate from succinyl-CoA (ligase route): step 1/1. Functionally, succinyl-CoA synthetase functions in the citric acid cycle (TCA), coupling the hydrolysis of succinyl-CoA to the synthesis of either ATP or GTP and thus represents the only step of substrate-level phosphorylation in the TCA. The beta subunit provides nucleotide specificity of the enzyme and binds the substrate succinate, while the binding sites for coenzyme A and phosphate are found in the alpha subunit. The chain is Succinate--CoA ligase [ADP-forming] subunit beta from Actinobacillus succinogenes (strain ATCC 55618 / DSM 22257 / CCUG 43843 / 130Z).